The following is an 85-amino-acid chain: Small ribosomal subunit protein bS16 (85 aa).

The protein belongs to the bacterial ribosomal protein bS16 family.

In Pseudomonas savastanoi pv. phaseolicola (strain 1448A / Race 6) (Pseudomonas syringae pv. phaseolicola (strain 1448A / Race 6)), this protein is Small ribosomal subunit protein bS16.